Here is a 210-residue protein sequence, read N- to C-terminus: Somatotropin-2 (210 aa).

Residues 1-22 form the signal peptide; it reads MARALVLLSVVLVSLLVNQGRA. Residue His38 participates in Zn(2+) binding. Cysteines 71 and 183 form a disulfide. Glu192 is a binding site for Zn(2+). A disulfide bond links Cys200 and Cys208.

Belongs to the somatotropin/prolactin family.

Its subcellular location is the secreted. Its function is as follows. Growth hormone plays an important role in growth control and is involved in the regulation of several anabolic processes. Implicated as an osmoregulatory substance important for seawater adaptation. The chain is Somatotropin-2 (gh2) from Carassius auratus (Goldfish).